Here is a 268-residue protein sequence, read N- to C-terminus: MAAVPDTSDMMTYCSGNENDLFFEEDGPKQMKGSFQDLDLSSMGDGGIQLQFSHHLYNKTFKHAMSIIVAVEKLKKIPVPCSQAFQDDDLRSLFSVIFEEEPIICDNWDEGYVCDAAMHSVNCRLRDIYHKSLVLSGACELQAVHLNGENTNQQVVFCMSFVQGEEETDKIPVALGLKEKNLYLSCGMKDGKPTLQLETVDPNTYPKRKMEKRFVFNKMEIKGNVEFESAMYPNWYISTSQAEKSPVFLGNTRGGRDITDFIMEITSA.

The propeptide occupies 1 to 115 (MAAVPDTSDM…DNWDEGYVCD (115 aa)).

Belongs to the IL-1 family. In terms of assembly, monomer. In its precursor form, weakly interacts with full-length MEFV; the mature cytokine does not interact at all. Interacts with integrins ITGAV:ITGBV and ITGA5:ITGB1; integrin-binding is required for IL1B signaling. Interacts with cargo receptor TMED10; the interaction is direct and is required for the secretion of IL1B mature form. Interacts with HSP90AB1; the interaction facilitates cargo translocation into the ERGIC. Interacts with HSP90B1; the interaction facilitates cargo translocation into the ERGIC.

Its subcellular location is the cytoplasm. It is found in the cytosol. The protein resides in the secreted. It localises to the lysosome. The protein localises to the extracellular exosome. In terms of biological role, potent pro-inflammatory cytokine. Initially discovered as the major endogenous pyrogen, induces prostaglandin synthesis, neutrophil influx and activation, T-cell activation and cytokine production, B-cell activation and antibody production, and fibroblast proliferation and collagen production. Promotes Th17 differentiation of T-cells. Synergizes with IL12/interleukin-12 to induce IFNG synthesis from T-helper 1 (Th1) cells. Plays a role in angiogenesis by inducing VEGF production synergistically with TNF and IL6. Involved in transduction of inflammation downstream of pyroptosis: its mature form is specifically released in the extracellular milieu by passing through the gasdermin-D (GSDMD) pore. The sequence is that of Interleukin-1 beta (IL1B) from Equus caballus (Horse).